The sequence spans 554 residues: Urocanate hydratase (554 aa).

NAD(+) contacts are provided by residues 52–53, Gln130, 176–178, Glu196, Arg201, 242–243, 263–267, 273–274, and Tyr322; these read GG, GMG, NA, QTSAH, and YL. Cys410 is an active-site residue. Gly492 contacts NAD(+).

Belongs to the urocanase family. NAD(+) serves as cofactor.

Its subcellular location is the cytoplasm. The enzyme catalyses 4-imidazolone-5-propanoate = trans-urocanate + H2O. It participates in amino-acid degradation; L-histidine degradation into L-glutamate; N-formimidoyl-L-glutamate from L-histidine: step 2/3. In terms of biological role, catalyzes the conversion of urocanate to 4-imidazolone-5-propionate. The polypeptide is Urocanate hydratase (Shewanella halifaxensis (strain HAW-EB4)).